The following is a 188-amino-acid chain: Elongation factor P (188 aa).

It belongs to the elongation factor P family.

Its subcellular location is the cytoplasm. The protein operates within protein biosynthesis; polypeptide chain elongation. In terms of biological role, involved in peptide bond synthesis. Stimulates efficient translation and peptide-bond synthesis on native or reconstituted 70S ribosomes in vitro. Probably functions indirectly by altering the affinity of the ribosome for aminoacyl-tRNA, thus increasing their reactivity as acceptors for peptidyl transferase. This chain is Elongation factor P, found in Ralstonia nicotianae (strain ATCC BAA-1114 / GMI1000) (Ralstonia solanacearum).